The primary structure comprises 240 residues: Adenosylcobinamide-GDP ribazoletransferase (240 aa).

The next 5 membrane-spanning stretches (helical) occupy residues Leu-31–Leu-51, Ala-62–Ala-81, Ile-109–Val-129, Ile-133–Leu-153, and Val-179–Leu-199.

The protein belongs to the CobS family. The cofactor is Mg(2+).

The protein resides in the cell inner membrane. It catalyses the reaction alpha-ribazole + adenosylcob(III)inamide-GDP = adenosylcob(III)alamin + GMP + H(+). The catalysed reaction is alpha-ribazole 5'-phosphate + adenosylcob(III)inamide-GDP = adenosylcob(III)alamin 5'-phosphate + GMP + H(+). It functions in the pathway cofactor biosynthesis; adenosylcobalamin biosynthesis; adenosylcobalamin from cob(II)yrinate a,c-diamide: step 7/7. In terms of biological role, joins adenosylcobinamide-GDP and alpha-ribazole to generate adenosylcobalamin (Ado-cobalamin). Also synthesizes adenosylcobalamin 5'-phosphate from adenosylcobinamide-GDP and alpha-ribazole 5'-phosphate. This is Adenosylcobinamide-GDP ribazoletransferase from Pseudomonas putida (strain ATCC 47054 / DSM 6125 / CFBP 8728 / NCIMB 11950 / KT2440).